We begin with the raw amino-acid sequence, 135 residues long: Large ribosomal subunit protein uL16c (135 aa).

The protein belongs to the universal ribosomal protein uL16 family. In terms of assembly, part of the 50S ribosomal subunit.

Its subcellular location is the plastid. It is found in the chloroplast. This Gossypium barbadense (Sea Island cotton) protein is Large ribosomal subunit protein uL16c.